Consider the following 243-residue polypeptide: MGQKVNPISNRLGIIRGWDSNWYGGNDYGDALLEDSKIRKYLNARLAKASVSRIVIERTLKLVTITVCTARPGIIIGKGGQEVDKLKEELKKITDKDIQINIFEVKRPELDAVIVANNIARQVEGKIAYRRAIKMAIANTMRMGAEGIKVLISGRLNGAEMARSEMYKEGRTPLHTFRADIDYCHAEALTKVGLLGIKVWICRGEVYGKRELAPNFTQTKESGRGGNGNNNGGKNFKRKKNNR.

The KH type-2 domain occupies 38 to 106; the sequence is IRKYLNARLA…DIQINIFEVK (69 aa). A disordered region spans residues 217–243; the sequence is TQTKESGRGGNGNNNGGKNFKRKKNNR.

Belongs to the universal ribosomal protein uS3 family. Part of the 30S ribosomal subunit. Forms a tight complex with proteins S10 and S14.

Functionally, binds the lower part of the 30S subunit head. Binds mRNA in the 70S ribosome, positioning it for translation. This Phocaeicola vulgatus (strain ATCC 8482 / DSM 1447 / JCM 5826 / CCUG 4940 / NBRC 14291 / NCTC 11154) (Bacteroides vulgatus) protein is Small ribosomal subunit protein uS3.